A 255-amino-acid chain; its full sequence is 4-hydroxy-tetrahydrodipicolinate reductase (255 aa).

NAD(+) contacts are provided by residues 9 to 14 (GFKGKM), D35, 89 to 91 (GTT), and 115 to 118 (APNF). H145 (proton donor/acceptor) is an active-site residue. (S)-2,3,4,5-tetrahydrodipicolinate is bound at residue H146. Catalysis depends on K149, which acts as the Proton donor. 155 to 156 (GT) contacts (S)-2,3,4,5-tetrahydrodipicolinate.

Belongs to the DapB family.

The protein localises to the cytoplasm. The enzyme catalyses (S)-2,3,4,5-tetrahydrodipicolinate + NAD(+) + H2O = (2S,4S)-4-hydroxy-2,3,4,5-tetrahydrodipicolinate + NADH + H(+). It catalyses the reaction (S)-2,3,4,5-tetrahydrodipicolinate + NADP(+) + H2O = (2S,4S)-4-hydroxy-2,3,4,5-tetrahydrodipicolinate + NADPH + H(+). It participates in amino-acid biosynthesis; L-lysine biosynthesis via DAP pathway; (S)-tetrahydrodipicolinate from L-aspartate: step 4/4. Functionally, catalyzes the conversion of 4-hydroxy-tetrahydrodipicolinate (HTPA) to tetrahydrodipicolinate. The chain is 4-hydroxy-tetrahydrodipicolinate reductase from Streptococcus pneumoniae serotype 4 (strain ATCC BAA-334 / TIGR4).